Consider the following 763-residue polypeptide: MHTGGETSACKPSSVRLAPSFSFHAAGLQMAGQMPHSHQYSDRRQPNISDQQVSALSYSDQIQQPLTNQVMPDIVMLQRRMPQTFRDPATAPLRKLSVDLIKTYKHINEVYYAKKKRRHQQGQGDDSSHKKERKVYNDGYDDDNYDYIVKNGEKWMDRYEIDSLIGKGSFGQVVKAYDRVEQEWVAIKIIKNKKAFLNQAQIEVRLLELMNKHDTEMKYYIVHLKRHFMFRNHLCLVFEMLSYNLYDLLRNTNFRGVSLNLTRKFAQQMCTALLFLATPELSIIHCDLKPENILLCNPKRSAIKIVDFGSSCQLGQRIYQYIQSRFYRSPEVLLGMPYDLAIDMWSLGCILVEMHTGEPLFSGANEVDQMNKIVEVLGIPPAHILDQAPKARKFFEKLPDGTWNLKKTKDGKREYKPPGTRKLHNILGVETGGPGGRRAGESGHTVADYLKFKDLILRMLDYDPKTRIQPYYALQHSFFKKTADEGTNTSNSVSTSPAMEQSQSSGTTSSTSSSSGGSSGTSNSGRARSDPTHQHRHSGGHFTAAVQAMDCETHSPQVRQQFPAPLGWSGTEAPTQVTVETHPVQETTFHVAPQQNALHHHHGNSSHHHHHHHHHHHHHGQQALGNRTRPRVYNSPTNSSSTQDSMEVGHSHHSMTSLSSSTTSSSTSSSSTGNQGNQAYQNRPVAANTLDFGQNGAMDVNLTVYSNPRQETGIAGHPTYQFSANTGPAHYMTEGHLTMRQGADREESPMTGVCVQQSPVASS.

At Ser-14 the chain carries Phosphoserine. The disordered stretch occupies residues 32 to 57; the sequence is GQMPHSHQYSDRRQPNISDQQVSALS. Over residues 46–57 the composition is skewed to polar residues; that stretch reads PNISDQQVSALS. Tyr-111 carries the post-translational modification Phosphotyrosine; by autocatalysis. The disordered stretch occupies residues 115 to 136; it reads KKRRHQQGQGDDSSHKKERKVY. Positions 117 to 134 match the Bipartite nuclear localization signal motif; sequence RRHQQGQGDDSSHKKERK. At Tyr-140 the chain carries Phosphotyrosine; by autocatalysis. Tyr-145 bears the Phosphotyrosine mark. At Tyr-159 the chain carries Phosphotyrosine; by autocatalysis. In terms of domain architecture, Protein kinase spans 159–479; the sequence is YEIDSLIGKG…PYYALQHSFF (321 aa). 165 to 173 is an ATP binding site; it reads IGKGSFGQV. Tyr-177 carries the post-translational modification Phosphotyrosine; by autocatalysis. Lys-188 contacts ATP. A Phosphotyrosine; by autocatalysis modification is found at Tyr-219. Position 238 to 241 (238 to 241) interacts with ATP; the sequence is FEML. Asp-287 (proton acceptor) is an active-site residue. Ser-310 is subject to Phosphoserine; by autocatalysis. A phosphotyrosine; by autocatalysis mark is found at Tyr-319 and Tyr-321. A Phosphothreonine; by autocatalysis modification is found at Thr-402. A disordered region spans residues 408 to 442; sequence TKDGKREYKPPGTRKLHNILGVETGGPGGRRAGES. A Phosphotyrosine; by autocatalysis modification is found at Tyr-449. Positions 485 to 501 are enriched in polar residues; sequence EGTNTSNSVSTSPAMEQ. 3 disordered regions span residues 485–540, 596–679, and 744–763; these read EGTN…HSGG, NALH…GNQA, and DREESPMTGVCVQQSPVASS. A compositionally biased stretch (low complexity) spans 502–525; sequence SQSSGTTSSTSSSSGGSSGTSNSG. Ser-529 and Ser-538 each carry phosphoserine. Residues 595 to 625 form a histidine-rich domain (HRD) region; it reads QNALHHHHGNSSHHHHHHHHHHHHHGQQALG. Residues 598-620 show a composition bias toward basic residues; it reads LHHHHGNSSHHHHHHHHHHHHHG. A compositionally biased stretch (polar residues) spans 634–645; it reads NSPTNSSSTQDS. Positions 654 to 672 are enriched in low complexity; it reads SMTSLSSSTTSSSTSSSST. Phosphoserine occurs at positions 748 and 758. Over residues 754–763 the composition is skewed to polar residues; sequence CVQQSPVASS.

The protein belongs to the protein kinase superfamily. CMGC Ser/Thr protein kinase family. MNB/DYRK subfamily. Interacts with RAD54L2/ARIP4. Interacts with CRY2. Interacts with RANBP9. Interacts with WDR68. Interacts with SIRT1. In terms of assembly, (Microbial infection) Interacts with human adenovirus 5 E1A protein. Autophosphorylated on numerous tyrosine residues. Can also autophosphorylate on serine and threonine residues (in vitro). Ubiquitous. Highest levels in skeletal muscle, testis, fetal lung and fetal kidney.

It localises to the nucleus. The protein localises to the nucleus speckle. It carries out the reaction L-seryl-[protein] + ATP = O-phospho-L-seryl-[protein] + ADP + H(+). It catalyses the reaction L-threonyl-[protein] + ATP = O-phospho-L-threonyl-[protein] + ADP + H(+). The enzyme catalyses L-tyrosyl-[protein] + ATP = O-phospho-L-tyrosyl-[protein] + ADP + H(+). The catalysed reaction is [DNA-directed RNA polymerase] + ATP = phospho-[DNA-directed RNA polymerase] + ADP + H(+). Inhibited by RANBP9. Inhibited by harmine, leucettamine B and leucettine L41. In terms of biological role, dual-specificity kinase which possesses both serine/threonine and tyrosine kinase activities. Exhibits a substrate preference for proline at position P+1 and arginine at position P-3. Plays an important role in double-strand breaks (DSBs) repair following DNA damage. Mechanistically, phosphorylates RNF169 and increases its ability to block accumulation of TP53BP1 at the DSB sites thereby promoting homologous recombination repair (HRR). Also acts as a positive regulator of transcription by acting as a CTD kinase that mediates phosphorylation of the CTD (C-terminal domain) of the large subunit of RNA polymerase II (RNAP II) POLR2A. May play a role in a signaling pathway regulating nuclear functions of cell proliferation. Modulates alternative splicing by phosphorylating the splice factor SRSF6. Has pro-survival function and negatively regulates the apoptotic process. Promotes cell survival upon genotoxic stress through phosphorylation of SIRT1. This in turn inhibits p53/TP53 activity and apoptosis. Phosphorylates SEPTIN4, SEPTIN5 and SF3B1 at 'Thr-434'. This is Dual specificity tyrosine-phosphorylation-regulated kinase 1A from Homo sapiens (Human).